A 158-amino-acid chain; its full sequence is SsrA-binding protein (158 aa).

The segment at 135-158 is disordered; that stretch reads DKRKTLKDRDWERDKQRGFKKDLD. Residues 141-158 show a composition bias toward basic and acidic residues; it reads KDRDWERDKQRGFKKDLD.

This sequence belongs to the SmpB family.

It localises to the cytoplasm. Its function is as follows. Required for rescue of stalled ribosomes mediated by trans-translation. Binds to transfer-messenger RNA (tmRNA), required for stable association of tmRNA with ribosomes. tmRNA and SmpB together mimic tRNA shape, replacing the anticodon stem-loop with SmpB. tmRNA is encoded by the ssrA gene; the 2 termini fold to resemble tRNA(Ala) and it encodes a 'tag peptide', a short internal open reading frame. During trans-translation Ala-aminoacylated tmRNA acts like a tRNA, entering the A-site of stalled ribosomes, displacing the stalled mRNA. The ribosome then switches to translate the ORF on the tmRNA; the nascent peptide is terminated with the 'tag peptide' encoded by the tmRNA and targeted for degradation. The ribosome is freed to recommence translation, which seems to be the essential function of trans-translation. This Psychrobacter cryohalolentis (strain ATCC BAA-1226 / DSM 17306 / VKM B-2378 / K5) protein is SsrA-binding protein.